The sequence spans 154 residues: MutT-like protein (154 aa).

In terms of domain architecture, Nudix hydrolase spans 15 to 136 (PLHSVSVAGV…YAIRLLDALD (122 aa)). 4 residues coordinate Mg(2+): Gly48, Glu63, Glu66, and Glu67. The Nudix box motif lies at 48-69 (GVLELDETPETGVAREVWEETG).

The protein belongs to the Nudix hydrolase family.

This Streptomyces ambofaciens protein is MutT-like protein.